The chain runs to 26 residues: Thioredoxin H-type (26 aa).

The protein belongs to the thioredoxin family. Plant H-type subfamily.

The protein resides in the cytoplasm. In terms of biological role, participates in various redox reactions through the reversible oxidation of the active center dithiol to a disulfide. The H form is known to activate a number of cytosolic enzymes. The polypeptide is Thioredoxin H-type (Populus euphratica (Euphrates poplar)).